Reading from the N-terminus, the 147-residue chain is Large ribosomal subunit protein uL13 (147 aa).

It belongs to the universal ribosomal protein uL13 family. As to quaternary structure, part of the 50S ribosomal subunit.

This protein is one of the early assembly proteins of the 50S ribosomal subunit, although it is not seen to bind rRNA by itself. It is important during the early stages of 50S assembly. The sequence is that of Large ribosomal subunit protein uL13 from Kineococcus radiotolerans (strain ATCC BAA-149 / DSM 14245 / SRS30216).